The chain runs to 425 residues: uncharacterized protein (425 aa).

The 52-residue stretch at 2 to 53 (SFNLLDLPIVPRQKALKYLEPIDLFELSLCSKRMAQSVRDLKIEASAHFITL) folds into the F-box domain.

This is an uncharacterized protein from Caenorhabditis elegans.